The chain runs to 228 residues: Probable septum site-determining protein MinC (228 aa).

This sequence belongs to the MinC family. Interacts with MinD and FtsZ.

Its function is as follows. Cell division inhibitor that blocks the formation of polar Z ring septums. Rapidly oscillates between the poles of the cell to destabilize FtsZ filaments that have formed before they mature into polar Z rings. Prevents FtsZ polymerization. The polypeptide is Probable septum site-determining protein MinC (Bacillus cytotoxicus (strain DSM 22905 / CIP 110041 / 391-98 / NVH 391-98)).